Here is an 85-residue protein sequence, read N- to C-terminus: uncharacterized protein (85 aa).

This is an uncharacterized protein from Shigella flexneri.